The following is a 305-amino-acid chain: Plant-type L-asparaginase (305 aa).

Threonine 175 acts as the Nucleophile in catalysis. Substrate contacts are provided by residues 202-205 (RVGD) and 224-227 (TGLG).

Belongs to the Ntn-hydrolase family. Heterotetramer of two alpha and two beta chains arranged as a dimer of alpha/beta heterodimers. In terms of processing, autocleaved. Generates the alpha and beta subunits. The N-terminal residue of the beta subunit is thought to be responsible for the nucleophile hydrolase activity.

It carries out the reaction L-asparagine + H2O = L-aspartate + NH4(+). Its function is as follows. Catalyzes the hydrolysis of L-asparagine into L-aspartate and ammonia. The protein is Plant-type L-asparaginase of Pyrococcus horikoshii (strain ATCC 700860 / DSM 12428 / JCM 9974 / NBRC 100139 / OT-3).